Consider the following 876-residue polypeptide: MTDVVQDFNELYDRIENKYKLKYTFDCATNSNERMLFCAIQERKSYLCCALNEQLSCVMHKCVPVIFGTRLDKQFRETDDVDANNNINGTFMLDGRFLSFPNIMMNNNVLVHNFYDKLYAKHCKRMFLYGNVDQEKHINRAIQLVYDKQDDVLFARDVYASDYVVTEDLNSVLETYLANSGKWKPLDFLFEYNTLHKQQLVEHIKIIMNHDINYSIDSLANKIVYKHAYLIELLLTSTILQNYQRVLDKTADDDAYTVANKRRKIQSVLYNKESKKIVDCIVNGRLIYCVSKTFSKQRKVFPNQQDNSSNNNIEISLPVLKYRVGNEVARITNDSMRQKMLKQKKDFVKFIGSFFHGEMTVAGKKFFLCRNACLPNVDYEMVAQKFQYLLKHNLVAFVDDLNDVQDDSLLIAFNDRPTNLKCLKSNTSFIVYTMKRNMAPIELKITDRILYVNHHEGMICIKKKLRVNNEADINVLLTPYEYHYKHSIYYNPIIQCTIVENDDVKSLMSKLEQYYYRNFIHLFHTTPVPKLIVSLTNLKNAMPVFEYKEENCVSGLPNGYSVAVNKSILLNNKMFKLWTLVRDNKLMTAEDPYIPHIALPICLYNNKVNKLKGKLVVGPKQSCLVKFTNSSDKNYVALDDGLVLYMAGVLVSNAKINWVYDGRRYKIETCTNGNFNVYKVYVYFRQIKNQKIEKLDASMVVNGDNVMLKIVIVTSTNDLEGIKICGIHGQKGVFNRSEDLTEWMAEDGTHAQICLSPVSFLSRQSNFDKIERKYVVRGGNHDDPHAKRYPIFNIPYMLFNNTPDNIFKEFIKTSHTGHEKVEGTRFDQWTKNQSFVGNRMSESLHWMRGGSNLPQNCGEFNVVSSLLMCNNTIMKN.

It belongs to the RNA polymerase beta chain family. Interacts with LEF-4, LEF-9, and p47.

The enzyme catalyses RNA(n) + a ribonucleoside 5'-triphosphate = RNA(n+1) + diphosphate. In terms of biological role, component of the viral DNA-dependent RNA polymerase which is composed of four equimolar subunits of LEF-4, LEF-8, LEF-9, and p47. Plays an essential role in late and very late gene expression. The sequence is that of Probable DNA-directed RNA polymerase catalytic subunit (LEF-8) from Autographa californica nuclear polyhedrosis virus (AcMNPV).